A 417-amino-acid polypeptide reads, in one-letter code: Squalene synthase (417 aa).

Residues Arg52 and Arg77 each contribute to the NADP(+) site. Mg(2+) contacts are provided by Asp80, Glu83, and Asp84. Arg218 provides a ligand contact to NADP(+). Residues 284–304 (SIFNFCAIPQVMAIATLAACY) form a helical membrane-spanning segment. The NADP(+) site is built by Lys315 and Arg317. A helical membrane pass occupies residues 384 to 404 (PIYLSFVMLLAALSWQYLSTL).

This sequence belongs to the phytoene/squalene synthase family. Mg(2+) serves as cofactor.

It localises to the endoplasmic reticulum membrane. It catalyses the reaction 2 (2E,6E)-farnesyl diphosphate + NADPH + H(+) = squalene + 2 diphosphate + NADP(+). The catalysed reaction is 2 (2E,6E)-farnesyl diphosphate + NADH + H(+) = squalene + 2 diphosphate + NAD(+). It carries out the reaction presqualene diphosphate + NADH + H(+) = squalene + diphosphate + NAD(+). The enzyme catalyses presqualene diphosphate + NADPH + H(+) = squalene + diphosphate + NADP(+). It catalyses the reaction 2 (2E,6E)-farnesyl diphosphate = presqualene diphosphate + diphosphate. It functions in the pathway terpene metabolism; lanosterol biosynthesis; lanosterol from farnesyl diphosphate: step 1/3. Catalyzes the condensation of 2 farnesyl pyrophosphate (FPP) moieties to form squalene. Proceeds in two distinct steps. In the first half-reaction, two molecules of FPP react to form the stable presqualene diphosphate intermediate (PSQPP), with concomitant release of a proton and a molecule of inorganic diphosphate. In the second half-reaction, PSQPP undergoes heterolysis, isomerization, and reduction with NADPH or NADH to form squalene. It is the first committed enzyme of the sterol biosynthesis pathway. The chain is Squalene synthase (FDFT1) from Bos taurus (Bovine).